The following is a 383-amino-acid chain: 8-amino-7-oxononanoate synthase (383 aa).

R23 provides a ligand contact to substrate. Residue 110 to 111 coordinates pyridoxal 5'-phosphate; it reads GF. Residue H135 coordinates substrate. Pyridoxal 5'-phosphate is bound by residues S181, H209, and T235. K238 carries the post-translational modification N6-(pyridoxal phosphate)lysine. T351 provides a ligand contact to substrate.

It belongs to the class-II pyridoxal-phosphate-dependent aminotransferase family. BioF subfamily. Homodimer. It depends on pyridoxal 5'-phosphate as a cofactor.

The catalysed reaction is 6-carboxyhexanoyl-[ACP] + L-alanine + H(+) = (8S)-8-amino-7-oxononanoate + holo-[ACP] + CO2. Its pathway is cofactor biosynthesis; biotin biosynthesis. In terms of biological role, catalyzes the decarboxylative condensation of pimeloyl-[acyl-carrier protein] and L-alanine to produce 8-amino-7-oxononanoate (AON), [acyl-carrier protein], and carbon dioxide. This chain is 8-amino-7-oxononanoate synthase, found in Aliivibrio fischeri (strain MJ11) (Vibrio fischeri).